Here is a 1288-residue protein sequence, read N- to C-terminus: CLIP-associating protein 2 (1288 aa).

Residues 1-62 (MALSLSQDRS…AAKSGASKEG (62 aa)) form a disordered region. Low complexity-rich tracts occupy residues 19–32 (GSRP…FKVP) and 40–62 (ESAS…SKEG). The tract at residues 62-312 (GAGAVDEEDF…RTLQSCLKSS (251 aa)) is TOG 1. 3 HEAT repeats span residues 174-209 (HGAE…IRHT), 210-246 (HVPR…EWQT), and 251-288 (RHAA…HFPG). 2 disordered regions span residues 314-571 (SVAS…SSRL) and 614-634 (ANSD…NGSI). Low complexity-rich tracts occupy residues 317–337 (SLPQ…RPLS) and 347–358 (PAGSKSSGSPAS). Polar residues-rich tracts occupy residues 406-421 (KQTL…SQVD) and 468-478 (TALSTLSTGAQ). The SXIP motif 1 signature appears at 490-493 (SRIP). The span at 496–518 (QGCSRDSSPTRLSVAPSNISHIY) shows a compositional bias: polar residues. The short motif at 527-530 (SRIP) is the SXIP motif 2 element. Over residues 616 to 630 (SDASSACSERSYSSR) the composition is skewed to low complexity. The TOG 2 stretch occupies residues 638 to 889 (MRQTEDVAEV…TKLLQNHLRN (252 aa)). HEAT repeat units lie at residues 718–755 (RVFS…KMGA) and 780–817 (LQFT…QMEP). The span at 891 to 900 (GNTAQASIGS) shows a compositional bias: polar residues. Disordered stretches follow at residues 891 to 936 (GNTA…FDYD) and 960 to 1047 (SVRS…DSGV). The span at 912–931 (SWSSPLTSPTNTSQNTPSPS) shows a compositional bias: low complexity. The span at 963–977 (SQEDMTEPPRKREGD) shows a compositional bias: basic and acidic residues. Residues 1019 to 1030 (SDSSFGSSSFNK) are compositionally biased toward low complexity. Acidic residues predominate over residues 1036 to 1046 (DQEESLTDDSG). HEAT repeat units lie at residues 1047–1086 (VDQS…ETQL), 1091–1128 (EHFK…RQPW), 1167–1204 (ISPD…RLPK), and 1209–1246 (QMLP…VIGE).

This sequence belongs to the CLASP family. As to quaternary structure, interacts with microtubules.

It localises to the cytoplasm. The protein resides in the cytoskeleton. Its subcellular location is the microtubule organizing center. The protein localises to the centrosome. It is found in the chromosome. It localises to the centromere. The protein resides in the kinetochore. Its subcellular location is the spindle. The protein localises to the golgi apparatus. It is found in the trans-Golgi network. It localises to the cell membrane. The protein resides in the cell projection. Its subcellular location is the ruffle membrane. Microtubule plus-end tracking protein that promotes the stabilization of dynamic microtubules. Involved in the nucleation of noncentrosomal microtubules originating from the trans-Golgi network (TGN). Required for the polarization of the cytoplasmic microtubule arrays in migrating cells towards the leading edge of the cell. May act at the cell cortex to enhance the frequency of rescue of depolymerizing microtubules. This cortical microtubule stabilizing activity is regulated at least in part by phosphatidylinositol 3-kinase signaling. Also performs a similar stabilizing function at the kinetochore which is essential for the bipolar alignment of chromosomes on the mitotic spindle. The sequence is that of CLIP-associating protein 2 (clasp2) from Danio rerio (Zebrafish).